We begin with the raw amino-acid sequence, 495 residues long: Ankyrin repeat domain-containing protein 34A (495 aa).

4 ANK repeats span residues 4–33, 37–72, 76–106, and 110–139; these read TEGH…YVNE, QGET…DPNI, LGRT…DPSV, and AGAS…AKGT. Gln15 carries the post-translational modification N5-methylglutamine. 2 stretches are compositionally biased toward polar residues: residues 147–162 and 180–191; these read DTSP…YLNS and VCTSPSEVQLQT. A disordered region spans residues 147–495; the sequence is DTSPSGTKKT…SLGGPGEPGR (349 aa). The segment covering 203–213 has biased composition (basic and acidic residues); it reads AQEEEEKRDVF. The span at 223–232 shows a compositional bias: pro residues; it reads DPSPSEPLPK. Over residues 233-242 the composition is skewed to basic residues; it reads PPRHPPKPLK. Thr315 bears the Phosphothreonine mark. Polar residues predominate over residues 375-385; the sequence is SVSSPRQSQES. A compositionally biased stretch (basic residues) spans 462-472; sequence RTKRKLVRRHS. Residues 485-495 are compositionally biased toward gly residues; that stretch reads QSLGGPGEPGR.

The protein belongs to the ANKRD34 family. Post-translationally, methylated at Gln-15 by N6AMT1.

This chain is Ankyrin repeat domain-containing protein 34A (Ankrd34a), found in Rattus norvegicus (Rat).